A 353-amino-acid polypeptide reads, in one-letter code: Heterogeneous nuclear ribonucleoproteins A2/B1 (353 aa).

Methionine 1 carries the N-acetylmethionine modification. Threonine 4 carries the phosphothreonine modification. The Nuclear localization signal motif lies at 9 to 15 (PLERKKR). RRM domains are found at residues 21-104 (RKLF…ESGK) and 112-191 (KKLF…LSRQ). A Glycyl lysine isopeptide (Lys-Gly) (interchain with G-Cter in SUMO2) cross-link involves residue lysine 22. Phosphoserine is present on serine 29. At arginine 38 the chain carries Omega-N-methylarginine. The residue at position 85 (serine 85) is a Phosphoserine. An N6,N6-dimethyllysine; alternate modification is found at lysine 104. A Glycyl lysine isopeptide (Lys-Gly) (interchain with G-Cter in SUMO2); alternate cross-link involves residue lysine 104. Glycyl lysine isopeptide (Lys-Gly) (interchain with G-Cter in SUMO2) cross-links involve residues lysine 112, lysine 120, and lysine 137. Position 140 is a phosphothreonine (threonine 140). A Phosphoserine modification is found at serine 149. Lysine 152 is covalently cross-linked (Glycyl lysine isopeptide (Lys-Gly) (interchain with G-Cter in SUMO2)). Threonine 159 bears the Phosphothreonine mark. Residues lysine 168 and lysine 173 each participate in a glycyl lysine isopeptide (Lys-Gly) (interchain with G-Cter in SUMO2); alternate cross-link. 2 positions are modified to N6-acetyllysine; alternate: lysine 168 and lysine 173. Threonine 176 is modified (phosphothreonine). Residue lysine 186 forms a Glycyl lysine isopeptide (Lys-Gly) (interchain with G-Cter in SUMO2) linkage. 2 positions are modified to phosphoserine: serine 189 and serine 201. The interval 193–353 (MQEVQSSRSG…SGGYGGRSRY (161 aa)) is disordered. Positions 202–223 (GRGGNFGFGDSRGGGGNFGPGP) are enriched in gly residues. Residue arginine 203 is modified to Asymmetric dimethylarginine; alternate. Dimethylated arginine; alternate is present on arginine 203. Arginine 203 carries the post-translational modification Omega-N-methylarginine; alternate. The residue at position 212 (serine 212) is a Phosphoserine. Arginine 213 carries the asymmetric dimethylarginine; alternate modification. Residue arginine 213 is modified to Dimethylated arginine; alternate. Arginine 213 carries the post-translational modification Omega-N-methylarginine; alternate. Serine 225 carries the post-translational modification Phosphoserine. Arginine 228 carries the omega-N-methylarginine modification. Phosphoserine is present on residues serine 231 and serine 236. The residue at position 238 (arginine 238) is an Omega-N-methylarginine. The residue at position 259 (serine 259) is a Phosphoserine. At arginine 266 the chain carries Asymmetric dimethylarginine; alternate. The residue at position 266 (arginine 266) is an Omega-N-methylarginine; alternate. A nuclear targeting sequence region spans residues 308–347 (QQPSNYGPMKSGNFGGSRNMGGPYGGGNYGPGGSGGSGGY). The segment covering 320-353 (NFGGSRNMGGPYGGGNYGPGGSGGSGGYGGRSRY) has biased composition (gly residues). Serine 324 carries the phosphoserine modification. Arginine 325 carries the post-translational modification Omega-N-methylarginine. A Phosphotyrosine modification is found at tyrosine 331. Residues serine 341 and serine 344 each carry the phosphoserine modification. Position 347 is a phosphotyrosine (tyrosine 347). The residue at position 350 (arginine 350) is an Omega-N-methylarginine.

As to quaternary structure, homodimer; dimerization is required for nucleocytoplasmic translocation. Identified in the spliceosome C complex. Identified in a IGF2BP1-dependent mRNP granule complex containing untranslated mRNAs. Interacts with IGF2BP1. Interacts with C9orf72. Interacts with DGCR8. Interacts with TARDBP. Interacts with CKAP5. Interacts with TBK1. Interacts with STING1. Interacts with SRC. Interacts with PPIA/CYPA. Interacts (via C-terminus) with FAM76B; the interaction results in retention of HNRNPA2B1 in the nucleus and inhibition of the NF-kappa-B-mediated inflammatory pathway. Interacts with NF-kappa-B inhibitors NFKBIA and NFKBIE; the interaction may be mediated by the RRM2 domain of HNRNPA2B1, and HNRNPA2B1 may interact simultaneously with FAM76B and either NFKBIA or NFKBIE to form a complex. In terms of processing, asymmetric dimethylation at Arg-266 constitutes the major methylation site. According to a report, methylation affects subcellular location and promotes nuclear localization. According to another report, methylation at Arg-266 does not influence nucleocytoplasmic shuttling. Post-translationally, sumoylated in exosomes, promoting miRNAs-binding. As to expression, in the brain, isoform A2 and isoform B1 are abundant in large ganglion-type neurons, such as Purkinje cells, and are less abundant in neighboring glia cells. Isoform A2 is more abundant than isoform B1 in brain. In testis, isoform A2 and isoform B1 are present in spermatogonia and spermatocytes, but not in spermatids or sperm. Isoform A2 is more abundant in the adrenal medulla than in the cortical cells. Isoform B1 is found in both adrenal medulla and cortical cells. Isoform A2 is more abundant than isoform B1 in the adrenal gland. Isoform A2 and isoform B1 are both detected in pancreas and kidney, and at lower levels in heart and lung. Isoform B1 is more abundant than isoform A2 in heart, lung and intestine (at protein level). Isoform A2b and isoform B1b are testis-specific.

The protein resides in the nucleus. Its subcellular location is the cytoplasm. It is found in the nucleoplasm. It localises to the cytoplasmic granule. The protein localises to the secreted. The protein resides in the extracellular exosome. Functionally, heterogeneous nuclear ribonucleoprotein (hnRNP) that associates with nascent pre-mRNAs, packaging them into hnRNP particles. The hnRNP particle arrangement on nascent hnRNA is non-random and sequence-dependent and serves to condense and stabilize the transcripts and minimize tangling and knotting. Packaging plays a role in various processes such as transcription, pre-mRNA processing, RNA nuclear export, subcellular location, mRNA translation and stability of mature mRNAs. Forms hnRNP particles with at least 20 other different hnRNP and heterogeneous nuclear RNA in the nucleus. Involved in transport of specific mRNAs to the cytoplasm in oligodendrocytes and neurons: acts by specifically recognizing and binding the A2RE (21 nucleotide hnRNP A2 response element) or the A2RE11 (derivative 11 nucleotide oligonucleotide) sequence motifs present on some mRNAs, and promotes their transport to the cytoplasm. Specifically binds single-stranded telomeric DNA sequences, protecting telomeric DNA repeat against endonuclease digestion. Also binds other RNA molecules, such as primary miRNA (pri-miRNAs): acts as a nuclear 'reader' of the N6-methyladenosine (m6A) mark by specifically recognizing and binding a subset of nuclear m6A-containing pri-miRNAs. Binding to m6A-containing pri-miRNAs promotes pri-miRNA processing by enhancing binding of DGCR8 to pri-miRNA transcripts. Involved in miRNA sorting into exosomes following sumoylation, possibly by binding (m6A)-containing pre-miRNAs. Acts as a regulator of efficiency of mRNA splicing, possibly by binding to m6A-containing pre-mRNAs. Plays a role in the splicing of pyruvate kinase PKM by binding repressively to sequences flanking PKM exon 9, inhibiting exon 9 inclusion and resulting in exon 10 inclusion and production of the PKM M2 isoform. Also plays a role in the activation of the innate immune response. Mechanistically, senses the presence of viral DNA in the nucleus, homodimerizes and is demethylated by JMJD6. In turn, translocates to the cytoplasm where it activates the TBK1-IRF3 pathway, leading to interferon alpha/beta production. This is Heterogeneous nuclear ribonucleoproteins A2/B1 from Rattus norvegicus (Rat).